We begin with the raw amino-acid sequence, 202 residues long: Small ribosomal subunit protein uS4c (202 aa).

Residues methionine 90–tyrosine 159 form the S4 RNA-binding domain.

The protein belongs to the universal ribosomal protein uS4 family. As to quaternary structure, part of the 30S ribosomal subunit. Contacts protein S5. The interaction surface between S4 and S5 is involved in control of translational fidelity.

It localises to the plastid. Its subcellular location is the chloroplast. One of the primary rRNA binding proteins, it binds directly to 16S rRNA where it nucleates assembly of the body of the 30S subunit. In terms of biological role, with S5 and S12 plays an important role in translational accuracy. This is Small ribosomal subunit protein uS4c (rps4) from Huperzia lucidula (Shining clubmoss).